The chain runs to 731 residues: EF-hand calcium-binding domain-containing protein 4B (731 aa).

The tract at residues Met-1–Thr-45 is disordered. Positions Leu-84–Ser-119 constitute an EF-hand domain. The Ca(2+) site is built by Asp-97, Asp-99, Asn-101, Tyr-103, and Glu-108. Residues Leu-201–Glu-382 adopt a coiled-coil conformation. The segment at Met-349–Ser-540 is proline-rich domain (PRD) which mediates interaction with VAV1. 2 disordered regions span residues Ser-426 to Arg-466 and Cys-494 to Gly-528. GTP is bound by residues Ser-554, Val-556, Gly-557, Lys-558, Thr-559, Ser-560, Ser-571, Pro-572, and Thr-577. Thr-559 is a binding site for Mg(2+). The segment at Pro-572–Ile-580 is switch-I. Mg(2+)-binding residues include Thr-577 and Asp-600. Residues Gly-603, Asn-658, Lys-659, Asp-661, and Ala-689 each contribute to the GTP site. A switch-II region spans residues Gly-603–Asp-619. A lipid anchor (S-geranylgeranyl cysteine) is attached at Cys-729.

This sequence belongs to the EFCAB4 family. As to quaternary structure, interacts with ORAI1 and STIM1; the interaction is direct and takes place in absence of Ca(2+). Forms a complex with ORAI1 and STIM1 at low concentration of Ca(2+), the complex dissociates at elevated Ca(2+) concentrations. Interacts with ORAI2 and ORAI3. Interacts with DYNC1H1. Interacts with the dynein-dynactin complex in a Ca(2+)-dependent manner. Interacts with VAV1. Mg(2+) serves as cofactor. Expressed in the Jurkat T-cell line. In terms of tissue distribution, expressed in endothelial cells. Expressed in Weibel-Palade bodies (which are P-selectin/SELP negative) in endothelial cells. Expressed in the Jurkat T-cell line.

Its subcellular location is the cytoplasm. The protein resides in the cytoskeleton. It localises to the microtubule organizing center. The protein localises to the cell membrane. It is found in the golgi apparatus membrane. Its subcellular location is the golgi apparatus. The protein resides in the trans-Golgi network membrane. It localises to the vesicle. It catalyses the reaction GTP + H2O = GDP + phosphate + H(+). In terms of biological role, ca(2+)-binding protein that plays a key role in store-operated Ca(2+) entry (SOCE) in T-cells by regulating CRAC channel activation. Acts as a cytoplasmic calcium-sensor that facilitates the clustering of ORAI1 and STIM1 at the junctional regions between the plasma membrane and the endoplasmic reticulum upon low Ca(2+) concentration. It thereby regulates CRAC channel activation, including translocation and clustering of ORAI1 and STIM1. Upon increase of cytoplasmic Ca(2+) resulting from opening of CRAC channels, dissociates from ORAI1 and STIM1, thereby destabilizing the ORAI1-STIM1 complex. Rab GTPase that mediates the trafficking of Weibel-Palade bodies (WPBs) to microtubule organizing center (MTOC) in endothelial cells in response to acute inflammatory stimuli. During histamine (but not thrombin) stimulation of endothelial cells, the dynein-bound form induces retrograde transport of a subset of WPBs along microtubules to the MTOC in a Ca(2+)-independent manner and its GTPase activity is essential for this function. Ca(2+)-regulated dynein adapter protein that activates dynein-mediated transport and dynein-dynactin motility on microtubules and regulates endosomal trafficking of CD47. Acts as an intracellular signaling module bridging two important T-cell receptor (TCR) signaling pathways, Ca(2+)-NFAT and JNK, to affect T-cell activation. In resting T-cells, is predominantly localized near TGN network in a GTP-bound form, upon TCR stimulation, localizes at the immunological synapse via interaction with VAV1 to activate downstream Ca(2+)-NFAT and JNK signaling pathways. Plays a role in T-helper 1 (Th1) cell differentiation and T-helper 17 (Th17) cell effector function. Plays a role in store-operated Ca(2+) entry (SOCE) in T-cells by regulating CRAC channel activation. The protein is EF-hand calcium-binding domain-containing protein 4B of Homo sapiens (Human).